Here is a 127-residue protein sequence, read N- to C-terminus: MAAATTTGTHRGLELRAAQRAVGSCEPQRAEFCRSARNADEFDQMSRMFGDVYPDVPVPKSVWRWIDSAQHRLARAGAVGALSVVDLLICDTAAARGLVVLHDDADYELAERHLPDIRVRRVVSADD.

Residues 26-120 (EPQRAEFCRS…ERHLPDIRVR (95 aa)) form the PINc domain. Asp86 contacts Mg(2+).

It belongs to the PINc/VapC protein family. The cofactor is Mg(2+).

Its function is as follows. Toxic component of a type II toxin-antitoxin (TA) system. An RNase. The cognate antitoxin is VapB6. The chain is Ribonuclease VapC6 from Mycobacterium tuberculosis (strain CDC 1551 / Oshkosh).